The primary structure comprises 400 residues: tRNA(Met) cytidine acetate ligase (400 aa).

ATP is bound by residues 7 to 20, Gly101, Asn159, and Arg184; that span reads IVEYNPFHNGHLYH.

This sequence belongs to the TmcAL family.

Its subcellular location is the cytoplasm. It catalyses the reaction cytidine(34) in elongator tRNA(Met) + acetate + ATP = N(4)-acetylcytidine(34) in elongator tRNA(Met) + AMP + diphosphate. In terms of biological role, catalyzes the formation of N(4)-acetylcytidine (ac(4)C) at the wobble position of elongator tRNA(Met), using acetate and ATP as substrates. First activates an acetate ion to form acetyladenylate (Ac-AMP) and then transfers the acetyl group to tRNA to form ac(4)C34. The chain is tRNA(Met) cytidine acetate ligase from Caldicellulosiruptor saccharolyticus (strain ATCC 43494 / DSM 8903 / Tp8T 6331).